The following is a 456-amino-acid chain: Keratin, type I cytoskeletal 12 (456 aa).

Polar residues predominate over residues 1-19 (MSLSVRTSALSRRSSSQNG). Positions 1–25 (MSLSVRTSALSRRSSSQNGVAGRPW) are disordered. Residues 1–114 (MSLSVRTSAL…GNDGGLLSGS (114 aa)) are head. The tract at residues 115–150 (EKETMQNLNDRLASYLGKVRALEEANAELENKIREW) is coil 1A. The IF rod domain maps to 115–402 (EKETMQNLND…RLLEGDTQGD (288 aa)). The linker 1 stretch occupies residues 154 to 171 (RRTGDSGSQSDYSKYYPL). The coil 1B stretch occupies residues 172–263 (IEDLKNKIIS…KNHEEELQSF (92 aa)). The segment at 264–286 (QAGGPGEVNVEMDAAPGVDLTKS) is linker 12. The segment at 287 to 397 (GELRKEINSN…IETYRRLLEG (111 aa)) is coil 2. Positions 398-456 (DTQGDGFDESLSLTVSKPQAPSVDSSKDPNKTRKIKTVVQEIVNGEVVSSQVQELEEAM) are tail. The disordered stretch occupies residues 405 to 430 (DESLSLTVSKPQAPSVDSSKDPNKTR). Polar residues predominate over residues 408–421 (LSLTVSKPQAPSVD).

It belongs to the intermediate filament family. Heterotetramer of two type I and two type II keratins. Keratin-3 associates with keratin-12.

In terms of biological role, involved in corneal epithelium organization, integrity and corneal keratin expression. This Rattus norvegicus (Rat) protein is Keratin, type I cytoskeletal 12.